The primary structure comprises 192 residues: Phosphoheptose isomerase (192 aa).

The region spanning 37 to 192 (LADSFKQEGK…IQLVEKEMAK (156 aa)) is the SIS domain. 52-54 (NGG) is a substrate binding site. Positions 61 and 65 each coordinate Zn(2+). Residues Glu65, 93–94 (ND), 119–121 (STS), Ser124, and Gln172 contribute to the substrate site. Zn(2+) is bound by residues Gln172 and His180.

The protein belongs to the SIS family. GmhA subfamily. In terms of assembly, homotetramer. Requires Zn(2+) as cofactor.

The protein resides in the cytoplasm. It catalyses the reaction 2 D-sedoheptulose 7-phosphate = D-glycero-alpha-D-manno-heptose 7-phosphate + D-glycero-beta-D-manno-heptose 7-phosphate. It functions in the pathway carbohydrate biosynthesis; D-glycero-D-manno-heptose 7-phosphate biosynthesis; D-glycero-alpha-D-manno-heptose 7-phosphate and D-glycero-beta-D-manno-heptose 7-phosphate from sedoheptulose 7-phosphate: step 1/1. Catalyzes the isomerization of sedoheptulose 7-phosphate in D-glycero-D-manno-heptose 7-phosphate. The chain is Phosphoheptose isomerase from Aeromonas salmonicida (strain A449).